Here is a 389-residue protein sequence, read N- to C-terminus: Protein CysO (389 aa).

Lys127 is subject to N6-(pyridoxal phosphate)lysine. Pyridoxal 5'-phosphate is bound by residues Asn155, 261–265 (GTSGH), and Ser341.

The protein belongs to the cysteine synthase/cystathionine beta-synthase family. In terms of assembly, homodimer. The cofactor is pyridoxal 5'-phosphate.

It carries out the reaction O-acetyl-L-serine + hydrogen sulfide = L-cysteine + acetate. The enzyme catalyses O-phospho-L-serine + hydrogen sulfide + H(+) = L-cysteine + phosphate. It catalyses the reaction L-homocysteine + L-serine = L,L-cystathionine + H2O. The protein operates within amino-acid biosynthesis; L-cysteine biosynthesis; L-cysteine from L-serine: step 2/2. Its function is as follows. Cysteine synthase that can also catalyze the synthesis of S-sulfo-L-cysteine from thiosulfate and O(3)-acetyl-L-serine, as well as the sulfhydrylation of L-serine by sulfide. The polypeptide is Protein CysO (cysO) (Aeropyrum pernix (strain ATCC 700893 / DSM 11879 / JCM 9820 / NBRC 100138 / K1)).